The primary structure comprises 207 residues: LexA repressor (207 aa).

Positions 28 to 48 form a DNA-binding region, H-T-H motif; the sequence is VREIGEAVGLASSSTVHGHLS. Catalysis depends on for autocatalytic cleavage activity residues Ser-130 and Lys-168.

Belongs to the peptidase S24 family. In terms of assembly, homodimer.

The enzyme catalyses Hydrolysis of Ala-|-Gly bond in repressor LexA.. Represses a number of genes involved in the response to DNA damage (SOS response), including recA and lexA. In the presence of single-stranded DNA, RecA interacts with LexA causing an autocatalytic cleavage which disrupts the DNA-binding part of LexA, leading to derepression of the SOS regulon and eventually DNA repair. This Staphylococcus carnosus (strain TM300) protein is LexA repressor.